We begin with the raw amino-acid sequence, 232 residues long: Ubiquinone biosynthesis O-methyltransferase (232 aa).

Positions 36, 55, 76, and 120 each coordinate S-adenosyl-L-methionine.

Belongs to the methyltransferase superfamily. UbiG/COQ3 family.

It catalyses the reaction a 3-demethylubiquinol + S-adenosyl-L-methionine = a ubiquinol + S-adenosyl-L-homocysteine + H(+). It carries out the reaction a 3-(all-trans-polyprenyl)benzene-1,2-diol + S-adenosyl-L-methionine = a 2-methoxy-6-(all-trans-polyprenyl)phenol + S-adenosyl-L-homocysteine + H(+). Its pathway is cofactor biosynthesis; ubiquinone biosynthesis. Its function is as follows. O-methyltransferase that catalyzes the 2 O-methylation steps in the ubiquinone biosynthetic pathway. This is Ubiquinone biosynthesis O-methyltransferase from Pseudomonas aeruginosa (strain LESB58).